The chain runs to 1023 residues: Rho GTPase-activating protein 11A (1023 aa).

The region spanning 49 to 239 is the Rho-GAP domain; sequence VPFNALPHSA…TLIDYASDIG (191 aa). The residue at position 285 (S285) is a Phosphoserine. At T306 the chain carries Phosphothreonine. S316 and S318 each carry phosphoserine. At T323 the chain carries Phosphothreonine. A phosphoserine mark is found at S339, S340, and S484. T508 bears the Phosphothreonine mark. Residues 567–589 are disordered; that stretch reads TPSNLNNKHNSNITSSPLSGDEN. 4 positions are modified to phosphoserine: S582, S585, S638, and S675. Residues 714-734 are disordered; it reads KQEFSSDEEIKKQQSPKDKLN. Residues 721 to 734 show a composition bias toward basic and acidic residues; it reads EEIKKQQSPKDKLN. At S847 the chain carries Phosphoserine. T866 is subject to Phosphothreonine. A Phosphoserine modification is found at S868. Residues 999-1023 are disordered; that stretch reads AWYKGSPKHPIGKTQLLPTSKPVDL.

It is found in the nucleus. Functionally, GTPase activator for the Rho-type GTPases by converting them to an inactive GDP-bound state. The polypeptide is Rho GTPase-activating protein 11A (Homo sapiens (Human)).